A 122-amino-acid chain; its full sequence is Small ribosomal subunit protein uS12c (122 aa).

It belongs to the universal ribosomal protein uS12 family. As to quaternary structure, part of the 30S ribosomal subunit.

Its subcellular location is the plastid. The protein resides in the chloroplast. In terms of biological role, with S4 and S5 plays an important role in translational accuracy. Located at the interface of the 30S and 50S subunits. The chain is Small ribosomal subunit protein uS12c (rps12) from Chloranthus spicatus (Chulantree).